The following is a 357-amino-acid chain: Homoserine O-succinyltransferase (357 aa).

Catalysis depends on C146, which acts as the Acyl-thioester intermediate. Residues K167 and S196 each coordinate substrate. H239 serves as the catalytic Proton acceptor. Residue E241 is part of the active site. A substrate-binding site is contributed by R253.

It belongs to the MetA family.

It is found in the cytoplasm. It carries out the reaction L-homoserine + succinyl-CoA = O-succinyl-L-homoserine + CoA. It functions in the pathway amino-acid biosynthesis; L-methionine biosynthesis via de novo pathway; O-succinyl-L-homoserine from L-homoserine: step 1/1. Transfers a succinyl group from succinyl-CoA to L-homoserine, forming succinyl-L-homoserine. This chain is Homoserine O-succinyltransferase, found in Allochromatium vinosum (strain ATCC 17899 / DSM 180 / NBRC 103801 / NCIMB 10441 / D) (Chromatium vinosum).